The sequence spans 306 residues: Ornithine carbamoyltransferase, anabolic (306 aa).

Residues 46 to 49 (STRT), Gln-73, Arg-97, and 124 to 127 (HPTQ) each bind carbamoyl phosphate. L-ornithine-binding positions include Asn-156, Asp-220, and 224-225 (SM). Carbamoyl phosphate-binding positions include 260–261 (CL) and Arg-288.

The protein belongs to the aspartate/ornithine carbamoyltransferase superfamily. OTCase family. As to quaternary structure, homohexamer; dimer of trimers.

The protein resides in the cytoplasm. It catalyses the reaction carbamoyl phosphate + L-ornithine = L-citrulline + phosphate + H(+). Its pathway is amino-acid biosynthesis; L-arginine biosynthesis; L-arginine from L-ornithine and carbamoyl phosphate: step 1/3. In terms of biological role, reversibly catalyzes the transfer of the carbamoyl group from carbamoyl phosphate (CP) to the N(epsilon) atom of ornithine (ORN) to produce L-citrulline, which is a substrate for argininosuccinate synthetase (ArgG) involved in the final step in arginine biosynthesis. In Campylobacter jejuni subsp. jejuni serotype O:2 (strain ATCC 700819 / NCTC 11168), this protein is Ornithine carbamoyltransferase, anabolic.